The following is a 427-amino-acid chain: Acetylornithine aminotransferase (427 aa).

Residues 1-23 (MSLQTLIEQATNPPESGSAASSP) are disordered. Residues 124–125 (GA) and Phe157 each bind pyridoxal 5'-phosphate. Position 160 (Arg160) interacts with N(2)-acetyl-L-ornithine. Position 248–251 (248–251 (DEVQ)) interacts with pyridoxal 5'-phosphate. The residue at position 277 (Lys277) is an N6-(pyridoxal phosphate)lysine. Ser304 is a binding site for N(2)-acetyl-L-ornithine. Thr305 contributes to the pyridoxal 5'-phosphate binding site.

This sequence belongs to the class-III pyridoxal-phosphate-dependent aminotransferase family. ArgD subfamily. As to quaternary structure, homodimer. Pyridoxal 5'-phosphate is required as a cofactor.

The protein localises to the cytoplasm. It carries out the reaction N(2)-acetyl-L-ornithine + 2-oxoglutarate = N-acetyl-L-glutamate 5-semialdehyde + L-glutamate. The protein operates within amino-acid biosynthesis; L-arginine biosynthesis; N(2)-acetyl-L-ornithine from L-glutamate: step 4/4. In Nostoc sp. (strain PCC 7120 / SAG 25.82 / UTEX 2576), this protein is Acetylornithine aminotransferase.